A 622-amino-acid chain; its full sequence is Low affinity potassium transport system protein Kup (622 aa).

A run of 12 helical transmembrane segments spans residues 9 to 29, 49 to 69, 103 to 123, 137 to 157, 165 to 185, 213 to 233, 247 to 267, 276 to 296, 337 to 357, 363 to 383, 396 to 416, and 419 to 439; these read LPAI…TSPL, VFGF…IKYL, VIMG…TPAI, PQLD…LFMI, VGKL…GLGL, VSFI…ALYA, WFTV…ALLL, PFFL…AALA, IYIP…IVSF, LAAA…ILST, FVAL…TANL, and LLSG…VMTT.

The protein belongs to the HAK/KUP transporter (TC 2.A.72) family.

It localises to the cell inner membrane. The catalysed reaction is K(+)(in) + H(+)(in) = K(+)(out) + H(+)(out). In terms of biological role, responsible for the low-affinity transport of potassium into the cell. Likely operates as a K(+):H(+) symporter. The sequence is that of Low affinity potassium transport system protein Kup from Shigella boydii serotype 18 (strain CDC 3083-94 / BS512).